A 279-amino-acid chain; its full sequence is DegV domain-containing protein SpyM3_1149 (279 aa).

In terms of domain architecture, DegV spans 4–278 (IKIVTDSSIT…EGAFAVMVRY (275 aa)). Hexadecanoate is bound by residues T62 and S95.

May bind long-chain fatty acids, such as palmitate, and may play a role in lipid transport or fatty acid metabolism. The protein is DegV domain-containing protein SpyM3_1149 of Streptococcus pyogenes serotype M3 (strain ATCC BAA-595 / MGAS315).